The following is a 150-amino-acid chain: Transcriptional repressor NrdR (150 aa).

Residues 3 to 34 (CPFCGYEETKVLDSRPVSNGTSIRRRRECLQC) fold into a zinc finger. The ATP-cone domain occupies 49-139 (IRIIKKDGRR…VYKEFRDLDS (91 aa)).

The protein belongs to the NrdR family. The cofactor is Zn(2+).

Negatively regulates transcription of bacterial ribonucleotide reductase nrd genes and operons by binding to NrdR-boxes. The polypeptide is Transcriptional repressor NrdR (Petrotoga mobilis (strain DSM 10674 / SJ95)).